Here is a 264-residue protein sequence, read N- to C-terminus: 3-methyl-2-oxobutanoate hydroxymethyltransferase (264 aa).

Mg(2+) is bound by residues Asp-45 and Asp-84. 3-methyl-2-oxobutanoate-binding positions include 45–46 (DS), Asp-84, and Lys-112. A Mg(2+)-binding site is contributed by Glu-114. Residue Glu-181 is the Proton acceptor of the active site.

This sequence belongs to the PanB family. Homodecamer; pentamer of dimers. Mg(2+) is required as a cofactor.

The protein resides in the cytoplasm. It catalyses the reaction 3-methyl-2-oxobutanoate + (6R)-5,10-methylene-5,6,7,8-tetrahydrofolate + H2O = 2-dehydropantoate + (6S)-5,6,7,8-tetrahydrofolate. The protein operates within cofactor biosynthesis; (R)-pantothenate biosynthesis; (R)-pantoate from 3-methyl-2-oxobutanoate: step 1/2. Its function is as follows. Catalyzes the reversible reaction in which hydroxymethyl group from 5,10-methylenetetrahydrofolate is transferred onto alpha-ketoisovalerate to form ketopantoate. In Shigella dysenteriae serotype 1 (strain Sd197), this protein is 3-methyl-2-oxobutanoate hydroxymethyltransferase.